Reading from the N-terminus, the 144-residue chain is Bacilliredoxin BC_2157 (144 aa).

Belongs to the bacilliredoxin family.

The sequence is that of Bacilliredoxin BC_2157 from Bacillus cereus (strain ATCC 14579 / DSM 31 / CCUG 7414 / JCM 2152 / NBRC 15305 / NCIMB 9373 / NCTC 2599 / NRRL B-3711).